The sequence spans 520 residues: Dihydropyrimidinase 2 (520 aa).

Residues His59, His61, and Lys152 each contribute to the Zn(2+) site. Lys152 is subject to N6-carboxylysine. Tyr157 serves as a coordination point for substrate. 2 residues coordinate Zn(2+): His185 and His241. Residue Ser291 coordinates substrate. Asp319 lines the Zn(2+) pocket. Asn340 contributes to the substrate binding site.

It belongs to the metallo-dependent hydrolases superfamily. Hydantoinase/dihydropyrimidinase family. As to quaternary structure, homotetramer. Requires Zn(2+) as cofactor. Carboxylation allows a single lysine to coordinate two zinc ions. Body wall muscles.

The catalysed reaction is 5,6-dihydrouracil + H2O = 3-(carbamoylamino)propanoate + H(+). The chain is Dihydropyrimidinase 2 (dhp-2) from Caenorhabditis elegans.